The following is a 455-amino-acid chain: GTPase Der (455 aa).

EngA-type G domains follow at residues 4–169 (PIVA…PPKH) and 178–353 (IQMA…EQHR). Residues 10–17 (GRPNVGKS), 57–61 (DTGGL), 120–123 (NKCE), 184–191 (GRPNVGKS), 231–235 (DTAGI), and 296–299 (NKWD) contribute to the GTP site. A KH-like domain is found at 354 to 439 (RRVSTSVVNE…PLKLFWRGKQ (86 aa)).

This sequence belongs to the TRAFAC class TrmE-Era-EngA-EngB-Septin-like GTPase superfamily. EngA (Der) GTPase family. Associates with the 50S ribosomal subunit.

Its function is as follows. GTPase that plays an essential role in the late steps of ribosome biogenesis. The polypeptide is GTPase Der (Prochlorococcus marinus (strain MIT 9313)).